The primary structure comprises 385 residues: Putative F-box protein At1g47765 (385 aa).

Residues 1–19 (MEQQKQKKRKVVSKSKRTQ) are compositionally biased toward basic residues. Positions 1–24 (MEQQKQKKRKVVSKSKRTQSKSAS) are disordered. The F-box domain maps to 20–69 (SKSASSLPLDLTSEILLRLPEKSIARFRCVSKLWLSITTDPYFINLFETR).

The sequence is that of Putative F-box protein At1g47765 from Arabidopsis thaliana (Mouse-ear cress).